A 487-amino-acid polypeptide reads, in one-letter code: FAD-dependent oxidoreductase domain-containing protein 1 (487 aa).

A helical transmembrane segment spans residues 62–82 (EQADVVIIGGGILGLSVAFWL).

As to quaternary structure, associates with components of the mitochondrial respiratory chain complex I. It depends on FAD as a cofactor.

The protein localises to the mitochondrion inner membrane. Functionally, required for the assembly of the mitochondrial membrane respiratory chain NADH dehydrogenase (Complex I). Involved in mid-late stages of complex I assembly. This chain is FAD-dependent oxidoreductase domain-containing protein 1 (Foxred1), found in Mus musculus (Mouse).